The sequence spans 602 residues: Elongation factor 4 (602 aa).

The region spanning 2-184 (DHIRNFSIIA…AVIARMPPPK (183 aa)) is the tr-type G domain. GTP contacts are provided by residues 14-19 (DHGKST) and 131-134 (NKMD).

It belongs to the TRAFAC class translation factor GTPase superfamily. Classic translation factor GTPase family. LepA subfamily.

The protein localises to the cell inner membrane. It carries out the reaction GTP + H2O = GDP + phosphate + H(+). In terms of biological role, required for accurate and efficient protein synthesis under certain stress conditions. May act as a fidelity factor of the translation reaction, by catalyzing a one-codon backward translocation of tRNAs on improperly translocated ribosomes. Back-translocation proceeds from a post-translocation (POST) complex to a pre-translocation (PRE) complex, thus giving elongation factor G a second chance to translocate the tRNAs correctly. Binds to ribosomes in a GTP-dependent manner. The chain is Elongation factor 4 from Leptothrix cholodnii (strain ATCC 51168 / LMG 8142 / SP-6) (Leptothrix discophora (strain SP-6)).